We begin with the raw amino-acid sequence, 449 residues long: Exodeoxyribonuclease 7 large subunit (449 aa).

It belongs to the XseA family. Heterooligomer composed of large and small subunits.

Its subcellular location is the cytoplasm. The enzyme catalyses Exonucleolytic cleavage in either 5'- to 3'- or 3'- to 5'-direction to yield nucleoside 5'-phosphates.. Functionally, bidirectionally degrades single-stranded DNA into large acid-insoluble oligonucleotides, which are then degraded further into small acid-soluble oligonucleotides. The polypeptide is Exodeoxyribonuclease 7 large subunit (Salmonella typhi).